The chain runs to 39 residues: Photosystem II reaction center protein X (39 aa).

Residues tryptophan 10–isoleucine 30 traverse the membrane as a helical segment.

Belongs to the PsbX family. Type 1 subfamily. PSII is composed of 1 copy each of membrane proteins PsbA, PsbB, PsbC, PsbD, PsbE, PsbF, PsbH, PsbI, PsbJ, PsbK, PsbL, PsbM, PsbT, PsbX, PsbY, PsbZ, Psb30/Ycf12, peripheral proteins PsbO, CyanoQ (PsbQ), PsbU, PsbV and a large number of cofactors. It forms dimeric complexes.

It is found in the cellular thylakoid membrane. Its function is as follows. Involved in the binding and/or turnover of quinones at the Q(B) site of photosystem II (PSII). PSII is a light-driven water plastoquinone oxidoreductase, using light energy to abstract electrons from H(2)O, generating a proton gradient subsequently used for ATP formation. This chain is Photosystem II reaction center protein X, found in Nostoc punctiforme (strain ATCC 29133 / PCC 73102).